A 610-amino-acid chain; its full sequence is Terminase, large subunit (610 aa).

Positions 30 to 94 are ssDNA-binding; that stretch reads RKDEDGIHWI…SRYMGLPNLK (65 aa). Positions 131–301 are ATPase activity; sequence DYGVIKVQLR…NHFYDIWTAA (171 aa). Positions 138 and 143 each coordinate ATP. The short motif at 161–167 is the Walker A motif element; the sequence is SRQLGKT. Residue Arg-202 participates in ATP binding. Positions 251–256 match the Walker B motif motif; sequence MIYIDE. Glu-256 acts as the For ATPase activity in catalysis. The ATPase coupling signature appears at 285–287; sequence TTT. The segment at 328–352 is binding to the portal protein; sequence IFDDGWQWSIQTINGSSLAQFRQEH. The segment at 360–559 is nuclease activity; the sequence is SGTLISGMKL…FGWLSTQSKF (200 aa). 3 residues coordinate Mg(2+): Asp-401, Glu-458, and Asp-542.

This sequence belongs to the Tequatrovirus large terminase family. Interacts with the terminase small subunit; the active complex is composed of a pentamer of terminase large subunits and a dodecamer of terminase small subunits. Interacts with the portal protein. Interacts with the RNA polymerase sigma factor gp55. Requires Mg(2+) as cofactor. Phosphorylated.

With respect to regulation, stimulated up to 50 to 100-fold by the terminase small subunit. Modestly activated by portal protein and single-stranded binding protein gp32 multimers. The terminase large subunit acts as an ATP driven molecular motor necessary for viral DNA translocation into empty capsids and as an endonuclease that cuts the viral genome to initiate and to end a packaging reaction. The terminase lies at a unique vertex of the procapsid and is composed of two subunits, a small terminase subunit involved in viral DNA recognition (packaging sequence), and a large terminase subunit possessing endonucleolytic and ATPase activities. Both terminase subunits heterooligomerize and are docked on the portal protein to form the packaging machine. The terminase large subunit exhibits endonuclease activity and cleaves the viral genome concatemer once the capsid is full (headful packaging). Once the capsid is packaged with the DNA, the terminase complex is substituted by the tail. The sequence is that of Terminase, large subunit (17) from Escherichia coli (Bacteriophage T4).